Here is a 943-residue protein sequence, read N- to C-terminus: Serine/threonine-protein kinase ATG1 (943 aa).

Residues 22–327 form the Protein kinase domain; the sequence is FVIDKEIGKG…FEDFFHHPVI (306 aa). ATP contacts are provided by residues 28 to 36 and Lys51; that span reads IGKGSFAQV. The active-site Proton acceptor is Asp165. Disordered regions lie at residues 334 to 468, 503 to 561, 774 to 800, 858 to 888, and 914 to 943; these read LVED…LTDE, QQGQ…SPGA, LPEE…GGQA, HLPK…SDDK, and AASK…SVPT. A compositionally biased stretch (basic and acidic residues) spans 338-352; the sequence is DIPKPEKPVLAETKS. Positions 517–529 are enriched in polar residues; it reads ATQQGHPTSTTGA. The segment covering 542-554 has biased composition (basic and acidic residues); sequence RNDHYRKASHDKT. Positions 919 to 928 are enriched in low complexity; sequence QQQQQQQQVV.

Belongs to the protein kinase superfamily. Ser/Thr protein kinase family. APG1/unc-51/ULK1 subfamily. In terms of assembly, homodimer. Forms a ternary complex with ATG13 and ATG17.

Its subcellular location is the cytoplasm. The protein localises to the preautophagosomal structure membrane. It catalyses the reaction L-seryl-[protein] + ATP = O-phospho-L-seryl-[protein] + ADP + H(+). The enzyme catalyses L-threonyl-[protein] + ATP = O-phospho-L-threonyl-[protein] + ADP + H(+). Its function is as follows. Serine/threonine protein kinase involved in the cytoplasm to vacuole transport (Cvt) and found to be essential in autophagy, where it is required for the formation of autophagosomes. Involved in the clearance of protein aggregates which cannot be efficiently cleared by the proteasome. Required for selective autophagic degradation of the nucleus (nucleophagy) as well as for mitophagy which contributes to regulate mitochondrial quantity and quality by eliminating the mitochondria to a basal level to fulfill cellular energy requirements and preventing excess ROS production. Also involved in endoplasmic reticulum-specific autophagic process, in selective removal of ER-associated degradation (ERAD) substrates. Plays a key role in ATG9 and ATG23 cycling through the pre-autophagosomal structure and is necessary to promote ATG18 binding to ATG9 through phosphorylation of ATG9. Catalyzes phosphorylation of ATG4, decreasing the interaction between ATG4 and ATG8 and impairing deconjugation of PE-conjugated forms of ATG8. This is Serine/threonine-protein kinase ATG1 from Chaetomium globosum (strain ATCC 6205 / CBS 148.51 / DSM 1962 / NBRC 6347 / NRRL 1970) (Soil fungus).